We begin with the raw amino-acid sequence, 311 residues long: Metal-staphylopine import system permease protein CntB (311 aa).

Helical transmembrane passes span 9-29 (IALM…LTYI), 105-125 (LTII…VVSA), 139-159 (VAFF…IIYV), 173-193 (GPES…GIYF), 237-257 (IFCM…YIFA), and 274-294 (FPVI…FNTL). The 197-residue stretch at 99–295 (FMNTLKLTII…VLFIVFNTLA (197 aa)) folds into the ABC transmembrane type-1 domain.

The protein belongs to the binding-protein-dependent transport system permease family. The complex is composed of two ATP-binding proteins (CntD and CntF), two transmembrane proteins (CntB and CntC) and a solute-binding protein (CntA).

Its subcellular location is the cell membrane. Its activity is regulated as follows. Nickel/cobalt import is reduced in the presence of zinc. Part of the ABC transporter complex CntABCDF (Opp1) involved in the uptake of metal in complex with the metallophore staphylopine (StP). Involved in the import of divalent metals ions such as nickel, cobalt and zinc. Probably responsible for the translocation of the substrate across the membrane. Plays a major role in nickel/cobalt import in zinc-depleted conditions. Contributes to virulence. Required for full urease activity in vitro. This chain is Metal-staphylopine import system permease protein CntB, found in Staphylococcus aureus (strain NCTC 8325 / PS 47).